The following is a 1203-amino-acid chain: DNA-directed RNA polymerase subunit beta' (1203 aa).

Residues cysteine 60, cysteine 62, cysteine 75, and cysteine 78 each coordinate Zn(2+). Residues aspartate 449, aspartate 451, and aspartate 453 each coordinate Mg(2+). Zn(2+) contacts are provided by cysteine 818, cysteine 892, cysteine 899, and cysteine 902.

This sequence belongs to the RNA polymerase beta' chain family. As to quaternary structure, the RNAP catalytic core consists of 2 alpha, 1 beta, 1 beta' and 1 omega subunit. When a sigma factor is associated with the core the holoenzyme is formed, which can initiate transcription. It depends on Mg(2+) as a cofactor. Requires Zn(2+) as cofactor.

It carries out the reaction RNA(n) + a ribonucleoside 5'-triphosphate = RNA(n+1) + diphosphate. DNA-dependent RNA polymerase catalyzes the transcription of DNA into RNA using the four ribonucleoside triphosphates as substrates. The protein is DNA-directed RNA polymerase subunit beta' of Bacillus cereus (strain ATCC 14579 / DSM 31 / CCUG 7414 / JCM 2152 / NBRC 15305 / NCIMB 9373 / NCTC 2599 / NRRL B-3711).